Consider the following 498-residue polypeptide: Ribose import ATP-binding protein RbsA 1 (498 aa).

2 ABC transporter domains span residues 7-243 (LHIQ…VGRR) and 254-496 (PRGE…IGKS). ATP is bound at residue 39–46 (GENGAGKS).

The protein belongs to the ABC transporter superfamily. Ribose importer (TC 3.A.1.2.1) family. In terms of assembly, the complex is composed of an ATP-binding protein (RbsA), two transmembrane proteins (RbsC) and a solute-binding protein (RbsB).

It localises to the cell inner membrane. It carries out the reaction D-ribose(out) + ATP + H2O = D-ribose(in) + ADP + phosphate + H(+). Functionally, part of the ABC transporter complex RbsABC involved in ribose import. Responsible for energy coupling to the transport system. The protein is Ribose import ATP-binding protein RbsA 1 of Pasteurella multocida (strain Pm70).